The primary structure comprises 162 residues: Ribosome maturation factor RimM (162 aa).

In terms of domain architecture, PRC barrel spans 86 to 160 (EGRYYYFALI…SIHVDPIPGL (75 aa)).

The protein belongs to the RimM family. In terms of assembly, binds ribosomal protein uS19.

It localises to the cytoplasm. An accessory protein needed during the final step in the assembly of 30S ribosomal subunit, possibly for assembly of the head region. Essential for efficient processing of 16S rRNA. May be needed both before and after RbfA during the maturation of 16S rRNA. It has affinity for free ribosomal 30S subunits but not for 70S ribosomes. This is Ribosome maturation factor RimM from Thermus thermophilus (strain ATCC 27634 / DSM 579 / HB8).